The primary structure comprises 432 residues: Glutamate-1-semialdehyde 2,1-aminomutase (432 aa).

Lys-267 is modified (N6-(pyridoxal phosphate)lysine).

It belongs to the class-III pyridoxal-phosphate-dependent aminotransferase family. HemL subfamily. Homodimer. Requires pyridoxal 5'-phosphate as cofactor.

It localises to the cytoplasm. The catalysed reaction is (S)-4-amino-5-oxopentanoate = 5-aminolevulinate. It functions in the pathway porphyrin-containing compound metabolism; protoporphyrin-IX biosynthesis; 5-aminolevulinate from L-glutamyl-tRNA(Glu): step 2/2. This is Glutamate-1-semialdehyde 2,1-aminomutase from Syntrophus aciditrophicus (strain SB).